We begin with the raw amino-acid sequence, 226 residues long: PKHD-type hydroxylase PputW619_4316 (226 aa).

The Fe2OG dioxygenase domain maps to 78-178 (KVFPPLINCY…RYAAFFWTQS (101 aa)). Residues His-96, Asp-98, and His-159 each contribute to the Fe cation site. Arg-169 serves as a coordination point for 2-oxoglutarate.

Requires Fe(2+) as cofactor. L-ascorbate serves as cofactor.

The protein is PKHD-type hydroxylase PputW619_4316 of Pseudomonas putida (strain W619).